A 175-amino-acid chain; its full sequence is Disulfide bond formation protein B (175 aa).

Residues 1–13 (MTALTRFAHSRSS) lie on the Cytoplasmic side of the membrane. The chain crosses the membrane as a helical span at residues 14–30 (WFLLTGTAIGLEAAALY). At 31–48 (FQYVMKLDPCVMCIYQRL) the chain is on the periplasmic side. Cysteine 40 and cysteine 43 form a disulfide bridge. Residues 49 to 64 (AVFGILVAGLIGMTAP) traverse the membrane as a helical segment. Topologically, residues 65–71 (KYRLIRI) are cytoplasmic. Residues 72–89 (LGASCWAVSATWGLKLAL) traverse the membrane as a helical segment. Residues 90–144 (ALVNMQNNPSPFATCSFLPEFPTWMPLHEWFPAVMLPTGMCTDLPWRFMDVTMAE) are Periplasmic-facing. Cysteines 104 and 130 form a disulfide. A helical transmembrane segment spans residues 145–163 (WMVVVFSTFLVIWLLFIVP). Topologically, residues 164–175 (ILSGSTKPSLYK) are cytoplasmic.

The protein belongs to the DsbB family.

Its subcellular location is the cell inner membrane. Required for disulfide bond formation in some periplasmic proteins. Acts by oxidizing the DsbA protein. The chain is Disulfide bond formation protein B from Shewanella sp. (strain W3-18-1).